Reading from the N-terminus, the 48-residue chain is MAKFPEAEARLLNVKICMHCNARNAIRATTCRKCGYKNLRPKNKERKA.

The protein belongs to the eukaryotic ribosomal protein eL40 family.

The sequence is that of Large ribosomal subunit protein eL40 from Methanoregula boonei (strain DSM 21154 / JCM 14090 / 6A8).